The chain runs to 300 residues: Probable alpha-L-glutamate ligase (300 aa).

Residues 104–287 (LQLLARQGID…IASRMIAWIE (184 aa)) form the ATP-grasp domain. ATP contacts are provided by residues Lys141, 178–179 (EY), Asp187, and 211–213 (RSN). Mg(2+)-binding residues include Asp248, Glu260, and Asn262. Residues Asp248, Glu260, and Asn262 each contribute to the Mn(2+) site.

It belongs to the RimK family. Mg(2+) serves as cofactor. It depends on Mn(2+) as a cofactor.

This is Probable alpha-L-glutamate ligase from Klebsiella pneumoniae (strain 342).